The following is a 357-amino-acid chain: MACLKLQAVTKSYDGKTQIIQPIDLDVADGEFVVMVGPSGCGKSTLLRMVAGLERTTSGDIYIDNQRVTDLEPKDRGIAMVFQNYALYPHMNVFDNMAYSLKIRGFGKTQIRERVEEAARILELMPLLQRKPRELSGGQRQRVAMGRAIVREPAVFLFDEPLSNLDAKLRVQMRLELQQLHQRLKTTSLYVTHDQVEAMTLAQRVIVMNKGIAEQIGAPSDIYRRPASLFVASFIGSPAMNLWAGRISDDGCRFDIGEDIALVLPEPKPQWRGKALTLGVRPEHIQLATRETGGIPLQISTLELLGADNLAHGKWGGQNVIARLSYEHCPAIGSTLWLHLPTSSWHLFDSQSGLRME.

The region spanning 4-235 (LKLQAVTKSY…PASLFVASFI (232 aa)) is the ABC transporter domain. Position 37–44 (37–44 (GPSGCGKS)) interacts with ATP.

Belongs to the ABC transporter superfamily. sn-glycerol-3-phosphate importer (TC 3.A.1.1.3) family. As to quaternary structure, the complex is composed of two ATP-binding proteins (UgpC), two transmembrane proteins (UgpA and UgpE) and a solute-binding protein (UgpB).

It is found in the cell inner membrane. It carries out the reaction sn-glycerol 3-phosphate(out) + ATP + H2O = sn-glycerol 3-phosphate(in) + ADP + phosphate + H(+). Part of the ABC transporter complex UgpBAEC involved in sn-glycerol-3-phosphate (G3P) import. Responsible for energy coupling to the transport system. The chain is sn-glycerol-3-phosphate import ATP-binding protein UgpC from Pectobacterium atrosepticum (strain SCRI 1043 / ATCC BAA-672) (Erwinia carotovora subsp. atroseptica).